We begin with the raw amino-acid sequence, 59 residues long: Single-pass membrane and coiled-coil domain-containing protein 4 (59 aa).

The tract at residues 1-27 (MRQLKGKPKKETSRDKKERKQAMQEAR) is disordered. The segment covering 9 to 27 (KKETSRDKKERKQAMQEAR) has biased composition (basic and acidic residues). Residues 9 to 31 (KKETSRDKKERKQAMQEARRQIT) are a coiled coil. Residues 32 to 52 (TVVLPTLAVVVLLIVVFVYVA) traverse the membrane as a helical segment.

Belongs to the SMCO4 family.

The protein localises to the membrane. The sequence is that of Single-pass membrane and coiled-coil domain-containing protein 4 (SMCO4) from Bos taurus (Bovine).